Reading from the N-terminus, the 288-residue chain is Phenazine biosynthesis-like domain-containing protein (288 aa).

Residue glutamate 46 is part of the active site.

This sequence belongs to the PhzF family. Interacts with UNRIP/MAWD.

The chain is Phenazine biosynthesis-like domain-containing protein (PBLD) from Pongo abelii (Sumatran orangutan).